The chain runs to 440 residues: Cytochrome c biogenesis protein Ccs1 (440 aa).

3 consecutive transmembrane segments (helical) span residues 25 to 45 (LQFS…GTVI), 84 to 104 (TWWF…CSIS), and 170 to 190 (LAPI…VLGL).

Belongs to the Ccs1/CcsB family. As to quaternary structure, may interact with CcsA.

It is found in the plastid. The protein localises to the chloroplast thylakoid membrane. Its function is as follows. Required during biogenesis of c-type cytochromes (cytochrome c6 and cytochrome f) at the step of heme attachment. This chain is Cytochrome c biogenesis protein Ccs1, found in Pyropia yezoensis (Susabi-nori).